Here is a 449-residue protein sequence, read N- to C-terminus: Malonyl-CoA:anthocyanidin 5-O-glucoside-6''-O-malonyltransferase (449 aa).

An N-acetylmethionine modification is found at Met1. Active-site proton acceptor residues include His162 and Asp394.

This sequence belongs to the plant acyltransferase family. As to expression, expressed in flowers. Detected in leaves, stems, roots and siliques.

The catalysed reaction is anthocyanin A3 + malonyl-CoA = anthocyanin A5 + CoA. It carries out the reaction anthocyanin A7 + malonyl-CoA = anthocyanin A9 + CoA. The enzyme catalyses anthocyanin A6 + malonyl-CoA = anthocyanin A8 + CoA. It catalyses the reaction anthocyanin A10 + malonyl-CoA = anthocyanin A11 + CoA. In terms of biological role, catalyzes the malonylation of the 5-O-glucose residue of anthocyanins, using malonyl-CoA as the malonyl donor. Acts only on anthocyanin substrates containing a 5-O-glucosyl moiety. Acts on the four native A.thaliana anthocyanins, A3, A7, and to a lesser extent, A6 and A10. Can also use the non-native anthocyanin compounds cyanin (cyanidin 3,5-diglucoside), malvin, pelargonidin 3,5-diglucoside, peonidin 3,5-diglucoside, cyanidin 3-coumaroylglucoside 5-glucoside, delphinidin 3-coumaroylrutinoside 5-glucoside and petunidin 3-coumaroylrutinoside 5-glucoside as substrates. Is the sole enzyme responsible for producing malonylated anthocyanin 5-O-glucosides in A.thaliana. Is not able to catalyze acyl transfer using acetyl-CoA, butyryl-CoA, hexanoyl-CoA, benzoyl-CoA, cinnamoyl-CoA, methylmalonyl-CoA, succinyl-CoA, p-coumaroyl-CoA or caffeoyl-CoA. The polypeptide is Malonyl-CoA:anthocyanidin 5-O-glucoside-6''-O-malonyltransferase (5MAT) (Arabidopsis thaliana (Mouse-ear cress)).